Here is a 255-residue protein sequence, read N- to C-terminus: Dehydrogenase/reductase SDR family member 11 (255 aa).

An N-terminal signal peptide occupies residues M1–A23. NADP(+)-binding positions include G13 to I18, R38 to S39, E44, D65 to L66, and N92. Positions 146 and 161 each coordinate substrate. NADP(+) is bound by residues Y161, K165, V196 to G199, and K203. The active-site Proton acceptor is Y161.

The protein belongs to the short-chain dehydrogenases/reductases (SDR) family.

The protein localises to the secreted. It carries out the reaction a 3beta-hydroxysteroid + NADP(+) = a 3-oxosteroid + NADPH + H(+). The catalysed reaction is 17beta-estradiol + NAD(+) = estrone + NADH + H(+). The enzyme catalyses 17beta-estradiol + NADP(+) = estrone + NADPH + H(+). It functions in the pathway steroid biosynthesis; estrogen biosynthesis. Its activity is regulated as follows. Inhibited by flavonoids including apigenin, luteolin, genistein, kaempferol and quercetin and also by carbenoxolone, zearalenone, glycyrrhetinic, curcumin and flufenamic acid. Catalyzes the conversion of the 17-keto group of estrone, 4- and 5-androstenes and 5-alpha-androstanes into their 17-beta-hydroxyl metabolites and the conversion of the 3-keto group of 3-, 3,17- and 3,20- diketosteroids into their 3-hydroxyl metabolites. Exhibits reductive 3-beta-hydroxysteroid dehydrogenase activity toward 5-beta-androstanes, 5-beta-pregnanes, 4-pregnenes and bile acids. May also reduce endogenous and exogenous alpha-dicarbonyl compounds and xenobiotic alicyclic ketones. The polypeptide is Dehydrogenase/reductase SDR family member 11 (DHRS11) (Gallus gallus (Chicken)).